The chain runs to 275 residues: Calcium uniporter protein, mitochondrial (275 aa).

The N-terminal 28 residues, 1–28 (MNSFVIRNGFGLVRTFNTRLFTTSTQNL), are a transit peptide targeting the mitochondrion. Topologically, residues 29-165 (EGELKTILGQ…DRKAHRRATA (137 aa)) are mitochondrial matrix. Positions 125-157 (VGLNKLIESKKSEINSLRQKIQPLEEKKQVIDR) form a coiled coil. Residues 166 to 186 (IIWTGLGYCFAQAAILARLTW) form a helical membrane-spanning segment. Residues 187–192 (WDLSWD) are Mitochondrial intermembrane-facing. The Selectivity filter signature appears at 191 to 199 (WDIIEPVSY). The helical transmembrane segment at 193 to 213 (IIEPVSYFLTFGSVLIGYTYF) threads the bilayer. Glutamate 195 is a Ca(2+) binding site. At 214 to 275 (TMTKTEFTYE…ELATKYDHTH (62 aa)) the chain is on the mitochondrial matrix side. Positions 244–270 (PKEDYENLVQAIDKKEKELKELELATK) form a coiled coil.

This sequence belongs to the MCU (TC 1.A.77) family. As to quaternary structure, homooligomer.

Its subcellular location is the mitochondrion inner membrane. It catalyses the reaction Ca(2+)(in) = Ca(2+)(out). Inhibited by ruthenium red or its derivative Ru360. Functionally, mitochondrial inner membrane calcium uniporter that mediates calcium uptake into mitochondria. Constitutes a pore-forming and calcium-conducting subunit. Mitochondrial calcium homeostasis plays key roles in cellular physiology and regulates cell bioenergetics, cytoplasmic calcium signals and activation of cell death pathways. Sufficient to operate as a pore-forming channel without the need of calcium-sensor or auxiliary subunit. The polypeptide is Calcium uniporter protein, mitochondrial (Dictyostelium discoideum (Social amoeba)).